The following is a 290-amino-acid chain: 4-diphosphocytidyl-2-C-methyl-D-erythritol kinase (290 aa).

Lys13 is a catalytic residue. 96-106 (PMGGGIGGGSS) is a binding site for ATP. Asp138 is a catalytic residue.

This sequence belongs to the GHMP kinase family. IspE subfamily.

It catalyses the reaction 4-CDP-2-C-methyl-D-erythritol + ATP = 4-CDP-2-C-methyl-D-erythritol 2-phosphate + ADP + H(+). It participates in isoprenoid biosynthesis; isopentenyl diphosphate biosynthesis via DXP pathway; isopentenyl diphosphate from 1-deoxy-D-xylulose 5-phosphate: step 3/6. In terms of biological role, catalyzes the phosphorylation of the position 2 hydroxy group of 4-diphosphocytidyl-2C-methyl-D-erythritol. In Vibrio vulnificus (strain CMCP6), this protein is 4-diphosphocytidyl-2-C-methyl-D-erythritol kinase.